The chain runs to 240 residues: Phosphoribosylaminoimidazole-succinocarboxamide synthase (240 aa).

This sequence belongs to the SAICAR synthetase family.

The enzyme catalyses 5-amino-1-(5-phospho-D-ribosyl)imidazole-4-carboxylate + L-aspartate + ATP = (2S)-2-[5-amino-1-(5-phospho-beta-D-ribosyl)imidazole-4-carboxamido]succinate + ADP + phosphate + 2 H(+). It participates in purine metabolism; IMP biosynthesis via de novo pathway; 5-amino-1-(5-phospho-D-ribosyl)imidazole-4-carboxamide from 5-amino-1-(5-phospho-D-ribosyl)imidazole-4-carboxylate: step 1/2. This Wolbachia pipientis wMel protein is Phosphoribosylaminoimidazole-succinocarboxamide synthase.